The sequence spans 140 residues: ATP synthase epsilon chain (140 aa).

This sequence belongs to the ATPase epsilon chain family. In terms of assembly, F-type ATPases have 2 components, CF(1) - the catalytic core - and CF(0) - the membrane proton channel. CF(1) has five subunits: alpha(3), beta(3), gamma(1), delta(1), epsilon(1). CF(0) has three main subunits: a, b and c.

The protein localises to the cell inner membrane. In terms of biological role, produces ATP from ADP in the presence of a proton gradient across the membrane. This is ATP synthase epsilon chain from Pseudoalteromonas translucida (strain TAC 125).